Consider the following 166-residue polypeptide: Large ribosomal subunit protein mL41 (166 aa).

A mitochondrion-targeting transit peptide spans 1–26; the sequence is MQNCIKLVPLALKCPQRAISTSAVLD.

This sequence belongs to the mitochondrion-specific ribosomal protein mL41 family. Component of the mitochondrial ribosome large subunit (39S) which comprises a 16S rRNA and about 50 distinct proteins.

The protein resides in the mitochondrion. This Drosophila pseudoobscura pseudoobscura (Fruit fly) protein is Large ribosomal subunit protein mL41 (mRpL41).